Reading from the N-terminus, the 101-residue chain is Small ribosomal subunit protein uS14 (101 aa).

The protein belongs to the universal ribosomal protein uS14 family. In terms of assembly, part of the 30S ribosomal subunit. Contacts proteins S3 and S10.

Its function is as follows. Binds 16S rRNA, required for the assembly of 30S particles and may also be responsible for determining the conformation of the 16S rRNA at the A site. The chain is Small ribosomal subunit protein uS14 from Orientia tsutsugamushi (strain Ikeda) (Rickettsia tsutsugamushi).